Here is a 71-residue protein sequence, read N- to C-terminus: Large ribosomal subunit protein bL31 (71 aa).

Residues cysteine 16, cysteine 18, cysteine 38, and cysteine 41 each coordinate Zn(2+).

Belongs to the bacterial ribosomal protein bL31 family. Type A subfamily. As to quaternary structure, part of the 50S ribosomal subunit. It depends on Zn(2+) as a cofactor.

Binds the 23S rRNA. This chain is Large ribosomal subunit protein bL31, found in Francisella tularensis subsp. mediasiatica (strain FSC147).